Here is a 391-residue protein sequence, read N- to C-terminus: Lipid-A-disaccharide synthase (391 aa).

The protein belongs to the LpxB family.

The enzyme catalyses a lipid X + a UDP-2-N,3-O-bis[(3R)-3-hydroxyacyl]-alpha-D-glucosamine = a lipid A disaccharide + UDP + H(+). The protein operates within bacterial outer membrane biogenesis; LPS lipid A biosynthesis. Functionally, condensation of UDP-2,3-diacylglucosamine and 2,3-diacylglucosamine-1-phosphate to form lipid A disaccharide, a precursor of lipid A, a phosphorylated glycolipid that anchors the lipopolysaccharide to the outer membrane of the cell. The sequence is that of Lipid-A-disaccharide synthase from Rickettsia akari (strain Hartford).